The chain runs to 395 residues: MSQLDLGTQSLELERFPPQENSNTLQAWEAADEYLLQNIDLSQIDGRPVLVFNDQFGTLACALHAYRPFSSSDSYMSQLATAHNLRLNHLDESAVTLLSSVDDLPEAPKLVVIKIPKALALLEHQLRALRRVVAPDTVIIAGAKSRDVHNSTLQLFEKILGPTKTTLAWKKARLIHCEVADIPLADAPETIDWPLPNTDYIIHNHANVFSRNNLDIGARFFMEILPYDVTGKIADLGCGNGVVGLIALEQNPLAEMLFVDESYMAVASSELNITVNRPQDLSRCEFMVSHGLAGVERESLQLVLCNPPFHQQHAVSDHVAWQMFCDAKRCLKAGGELMIVGNRHLDYFHKLKRLFGNCETLDSNQKFMVLKSVKQASSRSEGGGSGSLDMSYSDF.

It belongs to the methyltransferase superfamily. RlmG family.

Its subcellular location is the cytoplasm. It catalyses the reaction guanosine(1835) in 23S rRNA + S-adenosyl-L-methionine = N(2)-methylguanosine(1835) in 23S rRNA + S-adenosyl-L-homocysteine + H(+). Specifically methylates the guanine in position 1835 (m2G1835) of 23S rRNA. This chain is Ribosomal RNA large subunit methyltransferase G, found in Yersinia pseudotuberculosis serotype O:1b (strain IP 31758).